We begin with the raw amino-acid sequence, 493 residues long: Ferruginol synthase 1 (493 aa).

The chain crosses the membrane as a helical span at residues 2 to 22 (DSFPLLAALFFILAATWFISF). Cys-437 provides a ligand contact to heme.

This sequence belongs to the cytochrome P450 family. Requires heme as cofactor. In terms of tissue distribution, expressed in leaf glandular trichomes.

It localises to the membrane. The catalysed reaction is abieta-8,11,13-triene + reduced [NADPH--hemoprotein reductase] + O2 = ferruginol + oxidized [NADPH--hemoprotein reductase] + H2O + H(+). It catalyses the reaction ferruginol + reduced [NADPH--hemoprotein reductase] + O2 = 11-hydroxyferruginol + oxidized [NADPH--hemoprotein reductase] + H2O + H(+). The enzyme catalyses miltiradiene + 2 reduced [NADPH--hemoprotein reductase] + 2 O2 = 11-oxomiltiradiene + 2 oxidized [NADPH--hemoprotein reductase] + 3 H2O + 2 H(+). It participates in secondary metabolite biosynthesis; terpenoid biosynthesis. Monooxygenase involved in the biosynthesis of labdane-related diterpenes natural products. Catalyzes the oxidation of abietatriene to produce ferruginol. Catalyzes the oxidation of ferruginol at C-12 to produce 11-hydroxyferruginol. Ferruginol and 11-hydroxyferruginol are intermediates in the biosynthesis of carnosate, a potent antioxidant. May also convert miltiradiene into 11-oxomiltiradiene. The sequence is that of Ferruginol synthase 1 from Rosmarinus officinalis (Rosemary).